The sequence spans 174 residues: Chorismate pyruvate-lyase (174 aa).

Residues Met36, Arg78, Leu116, and Glu157 each coordinate substrate.

This sequence belongs to the UbiC family. As to quaternary structure, monomer.

The protein resides in the cytoplasm. The enzyme catalyses chorismate = 4-hydroxybenzoate + pyruvate. Its pathway is cofactor biosynthesis; ubiquinone biosynthesis. Functionally, removes the pyruvyl group from chorismate, with concomitant aromatization of the ring, to provide 4-hydroxybenzoate (4HB) for the ubiquinone pathway. The chain is Chorismate pyruvate-lyase from Yersinia pestis bv. Antiqua (strain Angola).